The sequence spans 230 residues: Demethylmenaquinone methyltransferase (230 aa).

S-adenosyl-L-methionine-binding positions include Thr62, Asp80, Asp100 to Ala101, and Ser117.

Belongs to the class I-like SAM-binding methyltransferase superfamily. MenG/UbiE family.

It catalyses the reaction a 2-demethylmenaquinol + S-adenosyl-L-methionine = a menaquinol + S-adenosyl-L-homocysteine + H(+). Its pathway is quinol/quinone metabolism; menaquinone biosynthesis; menaquinol from 1,4-dihydroxy-2-naphthoate: step 2/2. In terms of biological role, methyltransferase required for the conversion of demethylmenaquinol (DMKH2) to menaquinol (MKH2). The polypeptide is Demethylmenaquinone methyltransferase (Mycolicibacterium paratuberculosis (strain ATCC BAA-968 / K-10) (Mycobacterium paratuberculosis)).